The following is a 267-amino-acid chain: tRNA pseudouridine synthase A (267 aa).

D54 serves as the catalytic Nucleophile. A substrate-binding site is contributed by Y114.

It belongs to the tRNA pseudouridine synthase TruA family. Homodimer.

The enzyme catalyses uridine(38/39/40) in tRNA = pseudouridine(38/39/40) in tRNA. In terms of biological role, formation of pseudouridine at positions 38, 39 and 40 in the anticodon stem and loop of transfer RNAs. In Tropheryma whipplei (strain TW08/27) (Whipple's bacillus), this protein is tRNA pseudouridine synthase A.